Here is a 459-residue protein sequence, read N- to C-terminus: Methionine aminopeptidase 2-2 (459 aa).

A compositionally biased stretch (basic and acidic residues) spans 1 to 12 (MGSKSPEDHRQG). The tract at residues 1–87 (MGSKSPEDHR…KKLSVVQQTS (87 aa)) is disordered. The segment covering 43–54 (GQDEDGDDDDDE) has biased composition (acidic residues). The span at 55-66 (KTGIDLKTNDGA) shows a compositional bias: basic and acidic residues. Positions 67-79 (KKKRKRNKKKSKK) are enriched in basic residues. Histidine 210 contributes to the substrate binding site. A divalent metal cation-binding residues include aspartate 231, aspartate 242, and histidine 311. Histidine 319 serves as a coordination point for substrate. The a divalent metal cation site is built by glutamate 344 and glutamate 440.

It belongs to the peptidase M24A family. Methionine aminopeptidase eukaryotic type 2 subfamily. Co(2+) serves as cofactor. Requires Zn(2+) as cofactor. The cofactor is Mn(2+). Fe(2+) is required as a cofactor.

It localises to the cytoplasm. The catalysed reaction is Release of N-terminal amino acids, preferentially methionine, from peptides and arylamides.. Cotranslationally removes the N-terminal methionine from nascent proteins. The N-terminal methionine is often cleaved when the second residue in the primary sequence is small and uncharged (Met-Ala-, Cys, Gly, Pro, Ser, Thr, or Val). This is Methionine aminopeptidase 2-2 from Pyrenophora teres f. teres (strain 0-1) (Barley net blotch fungus).